Reading from the N-terminus, the 935-residue chain is Myocardin (935 aa).

The MEF2C-binding motif lies at 12-27; sequence IRRKFRSVLQLRLQQR. 3 RPEL repeats span residues 18–43, 62–87, and 106–131; these read SVLQ…PPLK, DSLR…QAST, and DDLN…PMDS. The segment at 37–73 is disordered; sequence GLIPPLKGPTEFHDPRKQLDSAKTEDSLRRKGRNRSD. A compositionally biased stretch (basic and acidic residues) spans 46–73; it reads TEFHDPRKQLDSAKTEDSLRRKGRNRSD. An HDAC5-binding region spans residues 153-201; it reads FEDDSSRDGLSPDQARSEDPQGSTGSTPDIKSTEAPLDTIQDLTPGSES. The segment at 155–283 is disordered; that stretch reads DDSSRDGLSP…SPPPMDSAYA (129 aa). Polar residues-rich tracts occupy residues 172–182 and 206–216; these read PQGSTGSTPDI and AASQPGNQSDP. Residues 244 to 261 are compositionally biased toward basic residues; that stretch reads NRHKKPKDPKPKVKKLKY. Residues 287–322 adopt a coiled-coil conformation; the sequence is QQQQLFLQLQILSQQQQQQQQQQQQQQQQQQQQQRF. A disordered region spans residues 337-378; sequence EQMARNPNPSSTPLSNTPLSPVKNSISGQTGVSSLKPGPLPP. The span at 342–357 shows a compositional bias: low complexity; sequence NPNPSSTPLSNTPLSP. Polar residues predominate over residues 358 to 369; sequence VKNSISGQTGVS. The 35-residue stretch at 380–414 folds into the SAP domain; it reads LDDLKVSELRQQLRIRGLPVSGTKTALVDRLRPFQ. Phosphoserine; by GSK3-beta is present on residues Ser454, Ser458, Ser462, and Ser466. Positions 498-518 are disordered; it reads ESLLSSLNGGSGPSEPDGLDS. Residues 519-563 adopt a coiled-coil conformation; it reads EKDKMLVEKQKVINQLTWKLRQEQRQVEELRMQLQKQKSSCSDQK. Positions 579–605 are disordered; sequence SCPFAPQQASGKGQGHSSDSPPPACET. Polar residues predominate over residues 585–597; it reads QQASGKGQGHSSD. Phosphoserine; by GSK3-beta is present on residues Ser624, Ser628, Ser632, and Ser636. The disordered stretch occupies residues 654–731; that stretch reads NNHYFLASSS…DAVKQQMTRS (78 aa). Polar residues predominate over residues 660-691; that stretch reads ASSSGAQRENHGVSSPSSSQGCAQMTGLQSSD. The segment covering 695-709 has biased composition (low complexity); it reads PTFSIPSPTFSKSSS. Positions 714–935 are required for interaction with and ubiquitination by STUB1; sequence ITQPPSYEDA…SPMDLHLQQW (222 aa). 3 positions are modified to phosphoserine; by MAPK1 and MAPK3: Ser812, Ser859, and Ser866. A Phosphothreonine; by MAPK1 and MAPK3 modification is found at Thr893.

As to quaternary structure, homodimer. Interacts with MLLT7/FOXO4. Interacts with SRF, its association does not depend on specific DNA sequences for ternary complex formation. Interacts (via C-terminal) with EP300 (via CREB-binding domain). Interacts with HDAC4 and HDAC5. Interacts with MEF2C. Interacts (via C-terminus) with STUB1/CHIP. Interacts with PURB. In terms of processing, ubiquitinated; by STUB1/CHIP at the C-terminus, leading to its degradation by the proteasome. Phosphorylation by GSK3B is required for STUB1/CHIP-mediated ubiquitination. Post-translationally, phosphorylation negatively regulates transcriptional activity. Phosphorylated; by GSK3B. In terms of tissue distribution, expressed in smooth muscle cell-containing tissues. Expressed in the heart. Expressed in the aorta and bladder. Weakly expression in the lung, testis and kidney. Weakly expressed in the stomach. Weakly expressed in the intestine and colon. As to expression, expressed in the heart. Predominantly expressed in cardiac muscle. In terms of tissue distribution, predominantly expressed in smooth muscle cell-rich tissues.

It is found in the nucleus speckle. Its function is as follows. Smooth muscle cells (SM) and cardiac muscle cells-specific transcriptional factor which uses the canonical single or multiple CArG boxes DNA sequence. Acts as a cofactor of serum response factor (SRF) with the potential to modulate SRF-target genes. Plays a crucial role in cardiogenesis, urinary bladder development, and differentiation of the smooth muscle cell lineage (myogenesis). Positively regulates the transcription of genes involved in vascular smooth muscle contraction. In terms of biological role, positively regulates the activation of smooth muscle cell gene promoter regions. Functionally, positively regulates the activation of smooth muscle cell gene promoter regions. Activation of the MYH6 promoter is enhanced in the presence of MEF2C. This chain is Myocardin (Myocd), found in Mus musculus (Mouse).